Consider the following 323-residue polypeptide: GDP-mannose 4,6-dehydratase (323 aa).

NADP(+) is bound by residues 11-14, R36, 59-60, and 81-85; these read TGQD, DM, and LAAQS. The active site involves T126. Active-site nucleophile residues include E128 and Y150. Positions 154, 180, and 185 each coordinate NADP(+).

It belongs to the NAD(P)-dependent epimerase/dehydratase family. GDP-mannose 4,6-dehydratase subfamily. Homotetramer. It depends on NADP(+) as a cofactor.

It catalyses the reaction GDP-alpha-D-mannose = GDP-4-dehydro-alpha-D-rhamnose + H2O. It functions in the pathway bacterial outer membrane biogenesis; lipopolysaccharide biosynthesis. Catalyzes the conversion of GDP-D-mannose to GDP-4-dehydro-6-deoxy-D-mannose. This chain is GDP-mannose 4,6-dehydratase, found in Pseudomonas aeruginosa (strain ATCC 15692 / DSM 22644 / CIP 104116 / JCM 14847 / LMG 12228 / 1C / PRS 101 / PAO1).